The chain runs to 517 residues: Peptide chain release factor 3 (517 aa).

One can recognise a tr-type G domain in the interval 9 to 269; that stretch reads AKRRTFAIIS…DFVEHAPAPR (261 aa). Residues 18-25, 86-90, and 140-143 contribute to the GTP site; these read SHPDAGKT, DTPGH, and NKLD.

It belongs to the TRAFAC class translation factor GTPase superfamily. Classic translation factor GTPase family. PrfC subfamily.

The protein localises to the cytoplasm. Functionally, increases the formation of ribosomal termination complexes and stimulates activities of RF-1 and RF-2. It binds guanine nucleotides and has strong preference for UGA stop codons. It may interact directly with the ribosome. The stimulation of RF-1 and RF-2 is significantly reduced by GTP and GDP, but not by GMP. This chain is Peptide chain release factor 3, found in Halorhodospira halophila (strain DSM 244 / SL1) (Ectothiorhodospira halophila (strain DSM 244 / SL1)).